Reading from the N-terminus, the 111-residue chain is Nucleoid-associated protein Clim_0875 (111 aa).

It belongs to the YbaB/EbfC family. Homodimer.

It is found in the cytoplasm. It localises to the nucleoid. Its function is as follows. Binds to DNA and alters its conformation. May be involved in regulation of gene expression, nucleoid organization and DNA protection. In Chlorobium limicola (strain DSM 245 / NBRC 103803 / 6330), this protein is Nucleoid-associated protein Clim_0875.